The sequence spans 512 residues: Lanosterol 14-alpha demethylase (512 aa).

C458 serves as a coordination point for heme.

Belongs to the cytochrome P450 family. The cofactor is heme.

It is found in the membrane. It carries out the reaction a 14alpha-methyl steroid + 3 reduced [NADPH--hemoprotein reductase] + 3 O2 = a Delta(14) steroid + formate + 3 oxidized [NADPH--hemoprotein reductase] + 4 H2O + 4 H(+). It catalyses the reaction a 14alpha-methyl steroid + reduced [NADPH--hemoprotein reductase] + O2 = a 14alpha-hydroxymethyl steroid + oxidized [NADPH--hemoprotein reductase] + H2O + H(+). The enzyme catalyses a 14alpha-hydroxymethyl steroid + reduced [NADPH--hemoprotein reductase] + O2 = a 14alpha-formyl steroid + oxidized [NADPH--hemoprotein reductase] + 2 H2O + H(+). The catalysed reaction is a 14alpha-formyl steroid + reduced [NADPH--hemoprotein reductase] + O2 = a Delta(14) steroid + formate + oxidized [NADPH--hemoprotein reductase] + H2O + 2 H(+). It carries out the reaction lanosterol + 3 reduced [NADPH--hemoprotein reductase] + 3 O2 = 4,4-dimethyl-5alpha-cholesta-8,14,24-trien-3beta-ol + formate + 3 oxidized [NADPH--hemoprotein reductase] + 4 H2O + 4 H(+). It catalyses the reaction lanosterol + reduced [NADPH--hemoprotein reductase] + O2 = 32-hydroxylanosterol + oxidized [NADPH--hemoprotein reductase] + H2O + H(+). The enzyme catalyses 32-hydroxylanosterol + reduced [NADPH--hemoprotein reductase] + O2 = 32-oxolanosterol + oxidized [NADPH--hemoprotein reductase] + 2 H2O + H(+). The catalysed reaction is 32-oxolanosterol + reduced [NADPH--hemoprotein reductase] + O2 = 4,4-dimethyl-5alpha-cholesta-8,14,24-trien-3beta-ol + formate + oxidized [NADPH--hemoprotein reductase] + H2O + 2 H(+). It carries out the reaction eburicol + 3 reduced [NADPH--hemoprotein reductase] + 3 O2 = 14-demethyleburicol + formate + 3 oxidized [NADPH--hemoprotein reductase] + 4 H2O + 4 H(+). It catalyses the reaction eburicol + reduced [NADPH--hemoprotein reductase] + O2 = 32-hydroxyeburicol + oxidized [NADPH--hemoprotein reductase] + H2O + H(+). The enzyme catalyses 32-hydroxyeburicol + reduced [NADPH--hemoprotein reductase] + O2 = 32-oxoeburicol + oxidized [NADPH--hemoprotein reductase] + 2 H2O + H(+). The catalysed reaction is 32-oxoeburicol + reduced [NADPH--hemoprotein reductase] + O2 = 14-demethyleburicol + formate + oxidized [NADPH--hemoprotein reductase] + H2O + 2 H(+). It participates in steroid biosynthesis; zymosterol biosynthesis; zymosterol from lanosterol: step 1/6. Sterol 14alpha-demethylase that plays a critical role in the third module of ergosterol biosynthesis pathway, being ergosterol the major sterol component in fungal membranes that participates in a variety of functions. The third module or late pathway involves the ergosterol synthesis itself through consecutive reactions that mainly occur in the endoplasmic reticulum (ER) membrane. In filamentous fungi, during the initial step of this module, lanosterol (lanosta-8,24-dien-3beta-ol) can be metabolized to eburicol. Sterol 14alpha-demethylase catalyzes the three-step oxidative removal of the 14alpha-methyl group (C-32) of both these sterols in the form of formate, and converts eburicol and lanosterol to 14-demethyleburicol (4,4,24-trimethylergosta-8,14,24(28)-trienol) and 4,4-dimethyl-5alpha-cholesta-8,14,24-trien-3beta-ol, respectively, which are further metabolized by other enzymes in the pathway to ergosterol. Can also use substrates not intrinsic to fungi, such as 24,25-dihydrolanosterol (DHL), producing 4,4-dimethyl-8,14-cholestadien-3-beta-ol, but at lower rates than the endogenous substrates. This Cunninghamella elegans protein is Lanosterol 14-alpha demethylase (CYP51).